Here is a 315-residue protein sequence, read N- to C-terminus: Cytochrome c biogenesis protein CcsA (315 aa).

Transmembrane regions (helical) follow at residues 15–35 (SCFL…GFGG), 39–59 (FSFT…LQLI), 73–93 (LYES…YIEV), 97–117 (TLFL…FTDF), 144–164 (VMIA…AYLV), 222–242 (TIGI…IWAN), 257–277 (WAFI…VGGW), and 283–303 (ALVA…VNLL).

It belongs to the CcmF/CycK/Ccl1/NrfE/CcsA family. As to quaternary structure, may interact with Ccs1.

The protein resides in the plastid. It is found in the chloroplast thylakoid membrane. Functionally, required during biogenesis of c-type cytochromes (cytochrome c6 and cytochrome f) at the step of heme attachment. In Chlorella vulgaris (Green alga), this protein is Cytochrome c biogenesis protein CcsA.